Reading from the N-terminus, the 98-residue chain is Protein translation factor SUI1 homolog (98 aa).

Belongs to the SUI1 family.

The sequence is that of Protein translation factor SUI1 homolog from Thermococcus kodakarensis (strain ATCC BAA-918 / JCM 12380 / KOD1) (Pyrococcus kodakaraensis (strain KOD1)).